The following is a 258-amino-acid chain: Methanol--corrinoid protein (258 aa).

Residues 30 to 124 (AEELYPKDEL…NSGATPKTKG (95 aa)) form the B12-binding N-terminal domain. A B12-binding domain is found at 123 to 248 (KGTVVCHVAE…DAIIAGTTDV (126 aa)). His136 contributes to the methylcob(III)alamin binding site.

This sequence belongs to the methylamine corrinoid protein family. Heterotetramer, composed of 2 MtaB and 2 MtaC subunits.

Harbors a corrinoid prosthetic group and acts as a methyl group carrier in methanogenesis in the methanol pathway. The methyl group of methanol is first transferred to the corrinoid prosthetic group of MtaC in the cob(I)amide oxidation state. This reaction is mediated by MtaB. The methyl group from MtaC is then transferred to coenzyme M by MtaA. The protein is Methanol--corrinoid protein (mtaC) of Methanosarcina barkeri (strain Fusaro / DSM 804).